A 231-amino-acid polypeptide reads, in one-letter code: Ion-translocating oxidoreductase complex subunit E (231 aa).

A run of 6 helical transmembrane segments spans residues 18-38, 39-59, 63-83, 86-106, 125-145, and 182-202; these read ALVQ…ATNA, LGLG…ISTL, TPSE…VSAV, LINA…PLIV, ALSA…MFVL, and PFLL…MLAG.

It belongs to the NqrDE/RnfAE family. As to quaternary structure, the complex is composed of six subunits: RsxA, RsxB, RsxC, RsxD, RsxE and RsxG.

It is found in the cell inner membrane. Its function is as follows. Part of a membrane-bound complex that couples electron transfer with translocation of ions across the membrane. Required to maintain the reduced state of SoxR. This is Ion-translocating oxidoreductase complex subunit E from Escherichia coli O6:K15:H31 (strain 536 / UPEC).